Here is a 201-residue protein sequence, read N- to C-terminus: CASP-like protein 1F2 (201 aa).

At 1-29 (MITSIATTTAGAFEVKSLGFIPYPSQPKR) the chain is on the cytoplasmic side. A helical transmembrane segment spans residues 30-50 (IFFMAQVIFRILAIAFAVASI). Residues 51 to 78 (SAMVTSDQNVIVFGMDTAARYSYSSAFR) lie on the Extracellular side of the membrane. A helical membrane pass occupies residues 79–99 (FLVGANAVVCGFSVLSLIFVC). At 100-119 (LMSRRSEAILEKNYYLFLHD) the chain is on the cytoplasmic side. A helical membrane pass occupies residues 120 to 140 (MVMMVMMVSGCSAATAIGYVG). Topologically, residues 141 to 162 (RYGEKEITWTAVCDFVGKFCNQ) are extracellular. The chain crosses the membrane as a helical span at residues 163–183 (ALVSIVLAYLALFCYVALTTL). At 184 to 201 (AAHKLNHSSSTAAIRQNE) the chain is on the cytoplasmic side.

The protein belongs to the Casparian strip membrane proteins (CASP) family. Homodimer and heterodimers.

The protein localises to the cell membrane. The protein is CASP-like protein 1F2 of Ricinus communis (Castor bean).